The chain runs to 367 residues: UDP-N-acetylglucosamine--N-acetylmuramyl-(pentapeptide) pyrophosphoryl-undecaprenol N-acetylglucosamine transferase (367 aa).

UDP-N-acetyl-alpha-D-glucosamine is bound by residues 21–23 (TGG), Asn-129, Arg-170, Ser-198, and Gln-295.

Belongs to the glycosyltransferase 28 family. MurG subfamily.

The protein resides in the cell inner membrane. The catalysed reaction is di-trans,octa-cis-undecaprenyl diphospho-N-acetyl-alpha-D-muramoyl-L-alanyl-D-glutamyl-meso-2,6-diaminopimeloyl-D-alanyl-D-alanine + UDP-N-acetyl-alpha-D-glucosamine = di-trans,octa-cis-undecaprenyl diphospho-[N-acetyl-alpha-D-glucosaminyl-(1-&gt;4)]-N-acetyl-alpha-D-muramoyl-L-alanyl-D-glutamyl-meso-2,6-diaminopimeloyl-D-alanyl-D-alanine + UDP + H(+). The protein operates within cell wall biogenesis; peptidoglycan biosynthesis. Its function is as follows. Cell wall formation. Catalyzes the transfer of a GlcNAc subunit on undecaprenyl-pyrophosphoryl-MurNAc-pentapeptide (lipid intermediate I) to form undecaprenyl-pyrophosphoryl-MurNAc-(pentapeptide)GlcNAc (lipid intermediate II). The chain is UDP-N-acetylglucosamine--N-acetylmuramyl-(pentapeptide) pyrophosphoryl-undecaprenol N-acetylglucosamine transferase from Synechococcus sp. (strain JA-2-3B'a(2-13)) (Cyanobacteria bacterium Yellowstone B-Prime).